The sequence spans 114 residues: Ribonuclease P protein component (114 aa).

Belongs to the RnpA family. Consists of a catalytic RNA component (M1 or rnpB) and a protein subunit.

The enzyme catalyses Endonucleolytic cleavage of RNA, removing 5'-extranucleotides from tRNA precursor.. Functionally, RNaseP catalyzes the removal of the 5'-leader sequence from pre-tRNA to produce the mature 5'-terminus. It can also cleave other RNA substrates such as 4.5S RNA. The protein component plays an auxiliary but essential role in vivo by binding to the 5'-leader sequence and broadening the substrate specificity of the ribozyme. This chain is Ribonuclease P protein component, found in Buchnera aphidicola subsp. Schizaphis graminum (strain Sg).